The following is a 1344-amino-acid chain: Regulatory-associated protein of TOR 1 (1344 aa).

The span at 28 to 44 (CVSSHDDGDSRRKDSEA) shows a compositional bias: basic and acidic residues. Disordered regions lie at residues 28 to 56 (CVSS…GTTE) and 771 to 818 (ASTD…DSVS). Positions 785–816 (SSSPLGSSGLMQGSPLSDDSSLHSDSGMMHDS) are enriched in low complexity. WD repeat units follow at residues 1025-1064 (RFET…LLNG), 1070-1111 (FPDK…GKQK), 1125-1164 (GARD…LVRS), 1168-1208 (ESEC…PLVC), 1214-1255 (QKVE…DTYL), 1259-1298 (AHRG…LGII), and 1307-1344 (QKIG…SQAR).

This sequence belongs to the WD repeat RAPTOR family. Interacts with TOR, ATPK1 and ML1. Interacts with KIN10. Post-translationally, phosphorylated by KIN10. In terms of tissue distribution, expressed in roots, leaves, flowers and seeds.

The protein localises to the cytoplasm. Its function is as follows. Probable component of the plant TOR kinase pathway that recruits substrates for TOR. Modulates plant cell growth and regulates the activity of ATPK1 kinase in response to osmotic stress. This Arabidopsis thaliana (Mouse-ear cress) protein is Regulatory-associated protein of TOR 1 (RAPTOR1).